The chain runs to 143 residues: Histone H2AX (143 aa).

The interval 1–22 (MSGRGKTGGKARAKAKSRSSRA) is disordered. S2 is subject to N-acetylserine. S2 is subject to Phosphoserine. Residues K6 and K10 each carry the N6-acetyllysine modification. Basic residues predominate over residues 7–19 (TGGKARAKAKSRS). Residue K10 is modified to N6-lactoyllysine; alternate. Glycyl lysine isopeptide (Lys-Gly) (interchain with G-Cter in ubiquitin) cross-links involve residues K14 and K16. K37 carries the post-translational modification N6-acetyllysine; by CREBBP and EP300. Residue K120 forms a Glycyl lysine isopeptide (Lys-Gly) (interchain with G-Cter in ubiquitin) linkage. Phosphoserine is present on residues S121 and S122. The interval 121–143 (SSATVGPKAPAVGKKASQASQEY) is disordered. Residues K128 and K135 each participate in a glycyl lysine isopeptide (Lys-Gly) (interchain with G-Cter in SUMO2) cross-link. At S137 the chain carries Phosphoserine. S140 carries the post-translational modification Phosphoserine; by ATM, ATR and PRKDC. Residues 140–141 (SQ) carry the [ST]-Q motif motif. Y143 is modified (phosphotyrosine; by WSTF).

This sequence belongs to the histone H2A family. In terms of assembly, the nucleosome is a histone octamer containing two molecules each of H2A, H2B, H3 and H4 assembled in one H3-H4 heterotetramer and two H2A-H2B heterodimers. The octamer wraps approximately 147 bp of DNA. Interacts with numerous proteins required for DNA damage signaling and repair when phosphorylated on Ser-140. These include MDC1, BRCA1 and the MRN complex, composed of MRE11, RAD50, and NBN. Interaction with the MRN complex is mediated at least in part by NBN. Also interacts with DHX9/NDHII when phosphorylated on Ser-140 and MCPH1 when phosphorylated at Ser-140 or Tyr-143. Interacts with ARRB2; the interaction is detected in the nucleus upon OR1D2 stimulation. Interacts with WRAP53/TCAB1. Interacts with TP53BP1. Interacts with HDGFL2. Post-translationally, phosphorylated on Ser-140 (to form gamma-H2AX or H2AX139ph) in response to DNA double strand breaks (DSBs) generated by exogenous genotoxic agents, by stalled replication forks, by meiotic recombination events and during immunoglobulin class switching in lymphocytes. Phosphorylation can extend up to several thousand nucleosomes from the actual site of the DSB and may mark the surrounding chromatin for recruitment of proteins required for DNA damage signaling and repair. Widespread phosphorylation may also serve to amplify the damage signal or aid repair of persistent lesions. Phosphorylation of Ser-140 (H2AX139ph) in response to ionizing radiation is mediated by both ATM and PRKDC while defects in DNA replication induce Ser-140 phosphorylation (H2AX139ph) subsequent to activation of ATR and PRKDC. Dephosphorylation of Ser-140 by PP2A is required for DNA DSB repair. In meiosis, Ser-140 phosphorylation (H2AX139ph) first occurs at synaptonemal complexes during leptotene and is an ATM-dependent response to the formation of programmed DSBs by SPO11. Ser-140 phosphorylation (H2AX139ph) subsequently occurs at unsynapsed regions of both autosomes and the XY bivalent during zygotene and is ATR- and BRCA1-dependent. Ser-140 phosphorylation (H2AX139ph) may also be required for transcriptional repression of unsynapsed chromatin and meiotic sex chromosome inactivation (MSCI), whereby the X and Y chromosomes condense in pachytene to form the heterochromatic XY-body. During immunoglobulin class switch recombination in lymphocytes, Ser-140 phosphorylation (H2AX139ph) at sites of DNA-recombination requires the activation-induced cytidine deaminase AICDA. Phosphorylation at Tyr-143 (H2AXY142ph) by BAZ1B/WSTF determines the relative recruitment of either DNA repair or pro-apoptotic factors. Phosphorylation at Tyr-143 (H2AXY142ph) favors the recruitment of APBB1/FE65 and pro-apoptosis factors such as MAPK8/JNK1, triggering apoptosis. In contrast, dephosphorylation of Tyr-143 by EYA proteins (EYA1, EYA2, EYA3 or EYA4) favors the recruitment of MDC1-containing DNA repair complexes to the tail of phosphorylated Ser-140 (H2AX139ph). Phosphorylated by VRK1. Monoubiquitination of Lys-120 (H2AXK119ub) by RING1 and RNF2/RING2 complex gives a specific tag for epigenetic transcriptional repression. Following DNA double-strand breaks (DSBs), it is ubiquitinated through 'Lys-63' linkage of ubiquitin moieties by the E2 ligase UBE2N and the E3 ligases RNF8 and RNF168, leading to the recruitment of repair proteins to sites of DNA damage. Ubiquitination at Lys-14 and Lys-16 (H2AK13Ub and H2AK15Ub, respectively) in response to DNA damage is initiated by RNF168 that mediates monoubiquitination at these 2 sites, and 'Lys-63'-linked ubiquitin are then conjugated to monoubiquitin; RNF8 is able to extend 'Lys-63'-linked ubiquitin chains in vitro. H2AK119Ub and ionizing radiation-induced 'Lys-63'-linked ubiquitination (H2AK13Ub and H2AK15Ub) are distinct events. In terms of processing, acetylation at Lys-6 (H2AXK5ac) by KAT5 component of the NuA4 histone acetyltransferase complex promotes NBN/NBS1 assembly at the sites of DNA damage. Acetylation at Lys-37 increases in S and G2 phases. This modification has been proposed to be important for DNA double-strand break repair. As to expression, most abundant in testis, thymus and spleen.

It is found in the nucleus. It localises to the chromosome. Functionally, variant histone H2A which replaces conventional H2A in a subset of nucleosomes. Nucleosomes wrap and compact DNA into chromatin, limiting DNA accessibility to the cellular machineries which require DNA as a template. Histones thereby play a central role in transcription regulation, DNA repair, DNA replication and chromosomal stability. DNA accessibility is regulated via a complex set of post-translational modifications of histones, also called histone code, and nucleosome remodeling. Required for checkpoint-mediated arrest of cell cycle progression in response to low doses of ionizing radiation and for efficient repair of DNA double strand breaks (DSBs) specifically when modified by C-terminal phosphorylation. The chain is Histone H2AX from Mus musculus (Mouse).